Reading from the N-terminus, the 59-residue chain is EIFPFNVPEGKNDPAFLQNLQQEALNYINQQQVPNLEKHKAEELKVAAKERAAYNAGYY.

This Limulus polyphemus (Atlantic horseshoe crab) protein is Cuticle protein 16 isoform D.